Reading from the N-terminus, the 361-residue chain is MIIKILDPSKNATYLWLPVYFYDEPFQFQILSSIIELVFYISCFHLMTISLYVMLKVQIFHRNLYILYIPMFCVWYGLIAGKLITIAYRLKFVDLDYELGEHIAMWTDDQAKMLHVSSLRGLELLIFGGFVQWHYMYTVVYGILGVAAERAIASVLIENYETNTQLYIPIALTIITQFLAISTSLSVLFHKASVFLSHLPWIISCSLGALAYLFIKIVNENFQKQITNPRRKRLFTISQQFQVKENLRALRLGTRLVFVVFFYVAFVSFGMFALAFDLVSSAYCHFVENFLFLNPYPICFTAMLTIPHWRKHFQNACFTWRLVKSAWTKPKTSTTSVEISTTKKLEAETDLYFRQLNESWI.

A run of 7 helical transmembrane segments spans residues 34–54, 66–86, 124–144, 168–188, 195–215, 256–276, and 286–306; these read IIEL…LYVM, ILYI…LITI, LLIF…YGIL, IPIA…LSVL, FLSH…YLFI, LVFV…ALAF, and FVEN…MLTI.

Belongs to the nematode receptor-like protein sre family.

It localises to the membrane. This chain is Serpentine receptor class epsilon-32 (sre-32), found in Caenorhabditis elegans.